A 585-amino-acid chain; its full sequence is Zinc finger protein 732 (585 aa).

In terms of domain architecture, KRAB spans Leu4–Pro75. The C2H2-type 1; degenerate zinc-finger motif lies at Phe141 to His163. Residues Lys167–His189 form a C2H2-type 2; degenerate zinc finger. The C2H2-type 3; degenerate zinc finger occupies Tyr195–His217. A C2H2-type 4 zinc finger spans residues Phe223–His244. Residues Tyr250–His272 form a C2H2-type 5; degenerate zinc finger. C2H2-type zinc fingers lie at residues Phe278–His300, Tyr306–His328, Tyr334–His356, Tyr362–His384, Tyr390–His412, His418–His440, Tyr446–His468, Tyr474–His496, and Tyr502–His524. The C2H2-type 15; degenerate zinc finger occupies Tyr530–His552. Residues Pro558–Tyr580 form a C2H2-type 16; degenerate zinc finger.

It belongs to the krueppel C2H2-type zinc-finger protein family.

It localises to the nucleus. Functionally, may be involved in transcriptional regulation. The chain is Zinc finger protein 732 (ZNF732) from Homo sapiens (Human).